Consider the following 310-residue polypeptide: Pirin-like protein At1g50590 (310 aa).

This sequence belongs to the pirin family.

The protein localises to the nucleus. This is Pirin-like protein At1g50590 from Arabidopsis thaliana (Mouse-ear cress).